A 342-amino-acid chain; its full sequence is Phosphoribosylformylglycinamidine cyclo-ligase (342 aa).

The protein belongs to the AIR synthase family.

The protein resides in the cytoplasm. It carries out the reaction 2-formamido-N(1)-(5-O-phospho-beta-D-ribosyl)acetamidine + ATP = 5-amino-1-(5-phospho-beta-D-ribosyl)imidazole + ADP + phosphate + H(+). The protein operates within purine metabolism; IMP biosynthesis via de novo pathway; 5-amino-1-(5-phospho-D-ribosyl)imidazole from N(2)-formyl-N(1)-(5-phospho-D-ribosyl)glycinamide: step 2/2. The chain is Phosphoribosylformylglycinamidine cyclo-ligase from Staphylococcus aureus (strain USA300).